The primary structure comprises 173 residues: Large ribosomal subunit protein uL10 (173 aa).

This sequence belongs to the universal ribosomal protein uL10 family. Part of the ribosomal stalk of the 50S ribosomal subunit. The N-terminus interacts with L11 and the large rRNA to form the base of the stalk. The C-terminus forms an elongated spine to which L12 dimers bind in a sequential fashion forming a multimeric L10(L12)X complex.

Forms part of the ribosomal stalk, playing a central role in the interaction of the ribosome with GTP-bound translation factors. The polypeptide is Large ribosomal subunit protein uL10 (Maridesulfovibrio salexigens (strain ATCC 14822 / DSM 2638 / NCIMB 8403 / VKM B-1763) (Desulfovibrio salexigens)).